Reading from the N-terminus, the 471-residue chain is tRNA-2-methylthio-N(6)-dimethylallyladenosine synthase (471 aa).

The region spanning L31–N149 is the MTTase N-terminal domain. The [4Fe-4S] cluster site is built by C40, C76, C110, C186, C190, and C193. Residues R172–E402 form the Radical SAM core domain. Residues A405–E468 enclose the TRAM domain.

It belongs to the methylthiotransferase family. MiaB subfamily. In terms of assembly, monomer. [4Fe-4S] cluster serves as cofactor.

The protein resides in the cytoplasm. It carries out the reaction N(6)-dimethylallyladenosine(37) in tRNA + (sulfur carrier)-SH + AH2 + 2 S-adenosyl-L-methionine = 2-methylsulfanyl-N(6)-dimethylallyladenosine(37) in tRNA + (sulfur carrier)-H + 5'-deoxyadenosine + L-methionine + A + S-adenosyl-L-homocysteine + 2 H(+). In terms of biological role, catalyzes the methylthiolation of N6-(dimethylallyl)adenosine (i(6)A), leading to the formation of 2-methylthio-N6-(dimethylallyl)adenosine (ms(2)i(6)A) at position 37 in tRNAs that read codons beginning with uridine. The protein is tRNA-2-methylthio-N(6)-dimethylallyladenosine synthase of Thermoanaerobacter pseudethanolicus (strain ATCC 33223 / 39E) (Clostridium thermohydrosulfuricum).